Reading from the N-terminus, the 162-residue chain is NADH-quinone oxidoreductase subunit I (162 aa).

4Fe-4S ferredoxin-type domains lie at Leu-52–Gly-82 and Thr-93–Asn-122. Residues Cys-62, Cys-65, Cys-68, Cys-72, Cys-102, Cys-105, Cys-108, and Cys-112 each contribute to the [4Fe-4S] cluster site.

It belongs to the complex I 23 kDa subunit family. As to quaternary structure, NDH-1 is composed of 14 different subunits. Subunits NuoA, H, J, K, L, M, N constitute the membrane sector of the complex. [4Fe-4S] cluster is required as a cofactor.

The protein localises to the cell inner membrane. It catalyses the reaction a quinone + NADH + 5 H(+)(in) = a quinol + NAD(+) + 4 H(+)(out). NDH-1 shuttles electrons from NADH, via FMN and iron-sulfur (Fe-S) centers, to quinones in the respiratory chain. The immediate electron acceptor for the enzyme in this species is believed to be ubiquinone. Couples the redox reaction to proton translocation (for every two electrons transferred, four hydrogen ions are translocated across the cytoplasmic membrane), and thus conserves the redox energy in a proton gradient. This Methylorubrum extorquens (strain PA1) (Methylobacterium extorquens) protein is NADH-quinone oxidoreductase subunit I.